Reading from the N-terminus, the 382-residue chain is Proton extrusion protein PxcA (382 aa).

Transmembrane regions (helical) follow at residues 162–182 (ILLL…TYIV), 257–277 (AIKN…VCLV), 305–325 (IILF…TVLL), and 340–360 (FILL…KYWI).

It belongs to the CemA family.

It is found in the cell inner membrane. Functionally, required for H(+) efflux immediately after light irradiation to form a rapid H(+) concentration gradient across the thylakoid membranes. Together with PxcL, contributes to transient H(+) uptake following dark to light transition. The polypeptide is Proton extrusion protein PxcA (Parasynechococcus marenigrum (strain WH8102)).